Consider the following 307-residue polypeptide: Ribonuclease Z (307 aa).

Zn(2+)-binding residues include histidine 61, histidine 63, aspartate 65, histidine 66, histidine 138, aspartate 207, and histidine 265. The Proton acceptor role is filled by aspartate 65.

The protein belongs to the RNase Z family. In terms of assembly, homodimer. Requires Zn(2+) as cofactor.

The enzyme catalyses Endonucleolytic cleavage of RNA, removing extra 3' nucleotides from tRNA precursor, generating 3' termini of tRNAs. A 3'-hydroxy group is left at the tRNA terminus and a 5'-phosphoryl group is left at the trailer molecule.. Functionally, zinc phosphodiesterase, which displays some tRNA 3'-processing endonuclease activity. Probably involved in tRNA maturation, by removing a 3'-trailer from precursor tRNA. In Methanothermobacter thermautotrophicus (strain ATCC 29096 / DSM 1053 / JCM 10044 / NBRC 100330 / Delta H) (Methanobacterium thermoautotrophicum), this protein is Ribonuclease Z.